Reading from the N-terminus, the 380-residue chain is uncharacterized protein (380 aa).

An N-terminal signal peptide occupies residues 1–28 (MQFLSDTQRMVLSRAVCASFFFFHVAVA). The region spanning 307-380 (AGDEKPRGYQ…DAGYETFPLF (74 aa)) is the SPOR domain.

This is an uncharacterized protein from Treponema pallidum (strain Nichols).